Here is a 165-residue protein sequence, read N- to C-terminus: UPF0114 protein in repA1-repA2 intergenic region (165 aa).

Transmembrane regions (helical) follow at residues 15–35 (LMFP…VKFF), 53–73 (LVLI…LVMV), and 136–156 (IMWC…MAYI).

Belongs to the UPF0114 family.

The protein resides in the cell membrane. The chain is UPF0114 protein in repA1-repA2 intergenic region from Buchnera aphidicola subsp. Thelaxes suberi.